Consider the following 171-residue polypeptide: Endoribonuclease YbeY (171 aa).

Positions 115, 119, and 125 each coordinate Zn(2+).

The protein belongs to the endoribonuclease YbeY family. Requires Zn(2+) as cofactor.

It localises to the cytoplasm. In terms of biological role, single strand-specific metallo-endoribonuclease involved in late-stage 70S ribosome quality control and in maturation of the 3' terminus of the 16S rRNA. This Tropheryma whipplei (strain TW08/27) (Whipple's bacillus) protein is Endoribonuclease YbeY.